A 138-amino-acid chain; its full sequence is ATP synthase epsilon chain (138 aa).

The protein belongs to the ATPase epsilon chain family. As to quaternary structure, F-type ATPases have 2 components, CF(1) - the catalytic core - and CF(0) - the membrane proton channel. CF(1) has five subunits: alpha(3), beta(3), gamma(1), delta(1), epsilon(1). CF(0) has three main subunits: a, b and c.

It localises to the cell membrane. Functionally, produces ATP from ADP in the presence of a proton gradient across the membrane. This chain is ATP synthase epsilon chain (atpC), found in Streptococcus mutans serotype c (strain ATCC 700610 / UA159).